Reading from the N-terminus, the 254-residue chain is 3-deoxy-manno-octulosonate cytidylyltransferase (254 aa).

It belongs to the KdsB family.

It localises to the cytoplasm. It carries out the reaction 3-deoxy-alpha-D-manno-oct-2-ulosonate + CTP = CMP-3-deoxy-beta-D-manno-octulosonate + diphosphate. The protein operates within nucleotide-sugar biosynthesis; CMP-3-deoxy-D-manno-octulosonate biosynthesis; CMP-3-deoxy-D-manno-octulosonate from 3-deoxy-D-manno-octulosonate and CTP: step 1/1. It participates in bacterial outer membrane biogenesis; lipopolysaccharide biosynthesis. Its function is as follows. Activates KDO (a required 8-carbon sugar) for incorporation into bacterial lipopolysaccharide in Gram-negative bacteria. This Pseudomonas syringae pv. syringae (strain B728a) protein is 3-deoxy-manno-octulosonate cytidylyltransferase.